A 316-amino-acid chain; its full sequence is Transaldolase (316 aa).

Residue lysine 132 is the Schiff-base intermediate with substrate of the active site.

The protein belongs to the transaldolase family. Type 1 subfamily. In terms of assembly, homodimer.

It localises to the cytoplasm. The catalysed reaction is D-sedoheptulose 7-phosphate + D-glyceraldehyde 3-phosphate = D-erythrose 4-phosphate + beta-D-fructose 6-phosphate. The protein operates within carbohydrate degradation; pentose phosphate pathway; D-glyceraldehyde 3-phosphate and beta-D-fructose 6-phosphate from D-ribose 5-phosphate and D-xylulose 5-phosphate (non-oxidative stage): step 2/3. Its function is as follows. Transaldolase is important for the balance of metabolites in the pentose-phosphate pathway. The protein is Transaldolase of Aliivibrio fischeri (strain ATCC 700601 / ES114) (Vibrio fischeri).